We begin with the raw amino-acid sequence, 132 residues long: ATP synthase epsilon chain (132 aa).

The protein belongs to the ATPase epsilon chain family. F-type ATPases have 2 components, CF(1) - the catalytic core - and CF(0) - the membrane proton channel. CF(1) has five subunits: alpha(3), beta(3), gamma(1), delta(1), epsilon(1). CF(0) has three main subunits: a, b and c.

It is found in the cell membrane. In terms of biological role, produces ATP from ADP in the presence of a proton gradient across the membrane. In Desulforamulus reducens (strain ATCC BAA-1160 / DSM 100696 / MI-1) (Desulfotomaculum reducens), this protein is ATP synthase epsilon chain.